Here is a 246-residue protein sequence, read N- to C-terminus: Uridylate kinase (246 aa).

18-21 (KLSG) is a binding site for ATP. Position 60 (G60) interacts with UMP. Residues G61 and R65 each coordinate ATP. UMP is bound by residues D80 and 141 to 148 (TGNPFFTT). Residues T168, Y174, and D177 each contribute to the ATP site.

Belongs to the UMP kinase family. In terms of assembly, homohexamer.

Its subcellular location is the cytoplasm. The enzyme catalyses UMP + ATP = UDP + ADP. It functions in the pathway pyrimidine metabolism; CTP biosynthesis via de novo pathway; UDP from UMP (UMPK route): step 1/1. Inhibited by UTP. Functionally, catalyzes the reversible phosphorylation of UMP to UDP. This chain is Uridylate kinase, found in Pseudomonas syringae pv. syringae (strain B728a).